Reading from the N-terminus, the 298-residue chain is MRDRTHELRQGDNISDDEDEVRVALVVHSGAARLGSPDDEFFQKVQTIRQTMAKLESKVRELEKQQVTILATPLPEESMKQGLQNLREEIKQLGREVRAQLKAIEPQKEEADENYNSVNTRMKKTQHGVLSQQFVELINKCNSMQSEYREKNVERIRRQLKITNAGMVSDEELEQMLDSGQSEVFVSNILKDTQVTRQALNEISARHSEIQQLERSIRELHEIFTFLATEVEMQGEMINRIEKNILSSADYVERGQEHVKIALENQKKARKKKVMIAICVSVTVLILAVIIGITITVG.

Over 1-274 (MRDRTHELRQ…NQKKARKKKV (274 aa)) the chain is Cytoplasmic. Residues Ser-15, Ser-29, Ser-36, Ser-117, Ser-208, and Ser-248 each carry the phosphoserine modification. A coiled-coil region spans residues 38–163 (DDEFFQKVQT…ERIRRQLKIT (126 aa)). Positions 154 to 298 (ERIRRQLKIT…VIIGITITVG (145 aa)) are interaction with CENPF. In terms of domain architecture, t-SNARE coiled-coil homology spans 200 to 262 (LNEISARHSE…ERGQEHVKIA (63 aa)). The chain crosses the membrane as a helical; Anchor for type IV membrane protein span at residues 275–295 (MIAICVSVTVLILAVIIGITI). Residues 296 to 298 (TVG) lie on the Extracellular side of the membrane.

It belongs to the syntaxin family. As to quaternary structure, interacts with STXBP6. Component of the SNARE complex composed of STX4, SNAP23 and VAMP7 that interacts with SYT7 during lysosomal exocytosis. Found in a complex with VAMP8 and SNAP23. Detected in a complex with SNAP23 and STXBP4. Interacts with VAMP2. Interacts with SNAP23 and SNAPIN. Interacts with LLGL1. Interacts (via C-terminus) with CENPF. Interacts with DOC2B. Interacts with STXBP3; excludes interaction with DOC2B and SNAP25. Interacts with STXBP4; excludes interaction with VAMP2. Interacts with STXBP5L. Expressed in the outer and inner hair cells of the cochlea.

It localises to the cell membrane. The protein resides in the cell projection. The protein localises to the neuron projection. It is found in the stereocilium. Plasma membrane t-SNARE that mediates docking of transport vesicles. Necessary for the translocation of SLC2A4 from intracellular vesicles to the plasma membrane. In neurons, recruited at neurite tips to membrane domains rich in the phospholipid 1-oleoyl-2-palmitoyl-PC (OPPC) which promotes neurite tip surface expression of the dopamine transporter SLC6A3/DAT by facilitating fusion of SLC6A3-containing transport vesicles with the plasma membrane. Together with STXB3 and VAMP2, may also play a role in docking/fusion of intracellular GLUT4-containing vesicles with the cell surface in adipocytes and in docking of synaptic vesicles at presynaptic active zones. Required for normal hearing. The chain is Syntaxin-4 (Stx4) from Mus musculus (Mouse).